Here is a 480-residue protein sequence, read N- to C-terminus: Protein nucleotidyltransferase YdiU (480 aa).

Residues Gly86, Gly88, Arg89, Lys109, Asp121, Gly122, Arg172, and Arg179 each contribute to the ATP site. The active-site Proton acceptor is the Asp248. Residues Asn249 and Asp258 each contribute to the Mg(2+) site. An ATP-binding site is contributed by Asp258.

This sequence belongs to the SELO family. Requires Mg(2+) as cofactor. The cofactor is Mn(2+).

The enzyme catalyses L-seryl-[protein] + ATP = 3-O-(5'-adenylyl)-L-seryl-[protein] + diphosphate. It catalyses the reaction L-threonyl-[protein] + ATP = 3-O-(5'-adenylyl)-L-threonyl-[protein] + diphosphate. It carries out the reaction L-tyrosyl-[protein] + ATP = O-(5'-adenylyl)-L-tyrosyl-[protein] + diphosphate. The catalysed reaction is L-histidyl-[protein] + UTP = N(tele)-(5'-uridylyl)-L-histidyl-[protein] + diphosphate. The enzyme catalyses L-seryl-[protein] + UTP = O-(5'-uridylyl)-L-seryl-[protein] + diphosphate. It catalyses the reaction L-tyrosyl-[protein] + UTP = O-(5'-uridylyl)-L-tyrosyl-[protein] + diphosphate. In terms of biological role, nucleotidyltransferase involved in the post-translational modification of proteins. It can catalyze the addition of adenosine monophosphate (AMP) or uridine monophosphate (UMP) to a protein, resulting in modifications known as AMPylation and UMPylation. This chain is Protein nucleotidyltransferase YdiU, found in Klebsiella pneumoniae subsp. pneumoniae (strain ATCC 700721 / MGH 78578).